The sequence spans 287 residues: Oxaloacetate decarboxylase (287 aa).

A substrate-binding site is contributed by S50. D88 is a Mg(2+) binding site. Residues R159 and H235 each coordinate substrate.

The protein belongs to the isocitrate lyase/PEP mutase superfamily. Oxaloacetate decarboxylase family. In terms of assembly, homotetramer; dimer of dimers. It depends on Mg(2+) as a cofactor.

It carries out the reaction oxaloacetate + H(+) = pyruvate + CO2. Functionally, catalyzes the decarboxylation of oxaloacetate into pyruvate. Seems to play a role in maintaining cellular concentrations of bicarbonate and pyruvate. This Chromohalobacter salexigens (strain ATCC BAA-138 / DSM 3043 / CIP 106854 / NCIMB 13768 / 1H11) protein is Oxaloacetate decarboxylase.